Consider the following 247-residue polypeptide: Neurotrophic factor BDNF precursor form (247 aa).

An N-terminal signal peptide occupies residues 1 to 18 (MTILFLTMVISYFGCMKA). Residues 19 to 128 (APMKEANVRG…AANMSMRVRR (110 aa)) constitute a propeptide that is removed on maturation. Residue asparagine 121 is glycosylated (N-linked (GlcNAc...) asparagine). 3 disulfides stabilise this stretch: cysteine 141-cysteine 208, cysteine 186-cysteine 237, and cysteine 196-cysteine 239.

It belongs to the NGF-beta family. Monomers and homodimers. Binds to NTRK2/TRKB. Can form heterodimers with other neurotrophin family members, such as NTF3 and NTF4 (in vitro), but the physiological relevance of this is not clear. BDNF precursor form: interacts with the heterodimer formed by NGFR and SORCS2. Mature BDNF has much lower affinity for the heterodimer formed by NGFR and SORCS2. N-glycosylated and glycosulfated, contrary to mature BDNF. Post-translationally, mature BDNF is produced by proteolytic removal of the propeptide, catalyzed by a FURIN family member. In addition, the precursor form is proteolytically cleaved within the propeptide, but this is not an obligatory intermediate for the production of mature BDNF. Can be converted into mature BDNF by plasmin (PLG).

Its subcellular location is the secreted. In terms of biological role, important signaling molecule that activates signaling cascades downstream of NTRK2. During development, promotes the survival and differentiation of selected neuronal populations of the peripheral and central nervous systems. Participates in axonal growth, pathfinding and in the modulation of dendritic growth and morphology. Major regulator of synaptic transmission and plasticity at adult synapses in many regions of the CNS. The versatility of BDNF is emphasized by its contribution to a range of adaptive neuronal responses including long-term potentiation (LTP), long-term depression (LTD), certain forms of short-term synaptic plasticity, as well as homeostatic regulation of intrinsic neuronal excitability. Important signaling molecule that activates signaling cascades downstream of NTRK2. Activates signaling cascades via the heterodimeric receptor formed by NGFR and SORCS2. Signaling via NGFR and SORCS2 plays a role in synaptic plasticity and long-term depression (LTD). Binding to NGFR and SORCS2 promotes neuronal apoptosis. Promotes neuronal growth cone collapse. The chain is Neurotrophic factor BDNF precursor form (BDNF) from Ursus arctos (Brown bear).